A 60-amino-acid polypeptide reads, in one-letter code: DNA gyrase inhibitor YacG (60 aa).

The Zn(2+) site is built by cysteine 15, cysteine 18, cysteine 30, and cysteine 34.

It belongs to the DNA gyrase inhibitor YacG family. In terms of assembly, interacts with GyrB. Requires Zn(2+) as cofactor.

Inhibits all the catalytic activities of DNA gyrase by preventing its interaction with DNA. Acts by binding directly to the C-terminal domain of GyrB, which probably disrupts DNA binding by the gyrase. This Nitrobacter hamburgensis (strain DSM 10229 / NCIMB 13809 / X14) protein is DNA gyrase inhibitor YacG.